The sequence spans 819 residues: NEDD4-binding protein 1 (819 aa).

The span at 1–13 (MASGSVQSSSGNG) shows a compositional bias: polar residues. Residues 1–20 (MASGSVQSSSGNGRRQAAVV) form a disordered region. The region spanning 80-164 (KQAVRRAKEY…VQQFIALFKD (85 aa)) is the KH-like domain. Residues 226-241 (DDKAECKVNQKDEVSR) are compositionally biased toward basic and acidic residues. Disordered stretches follow at residues 226-247 (DDKA…AGTP) and 666-736 (KLDD…MAPR). An RNase NYN domain is found at 517 to 669 (LKHIIIDGSN…LGRYGPKLDD (153 aa)). Residues 673–689 (KQPNNRTVHSSFPSSNE) show a composition bias toward polar residues. Positions 772 to 819 (RSPSETMQLKEALLKIFPEADQRHKINEILTAHPFMRDLNALSAMVLD) are coCUN.

This sequence belongs to the N4BP1 family.

The protein localises to the cytoplasm. Its subcellular location is the cytosol. The protein resides in the nucleus. It localises to the nucleolus. It is found in the PML body. Functionally, potent suppressor of cytokine production that acts as a regulator of innate immune signaling and inflammation. Acts as a key negative regulator of select cytokine and chemokine responses elicited by TRIF-independent Toll-like receptors (TLRs), thereby limiting inflammatory cytokine responses to minor insults. Has ribonuclease activity. The polypeptide is NEDD4-binding protein 1 (Xenopus tropicalis (Western clawed frog)).